The following is a 215-amino-acid chain: CASP-like protein 1E1 (215 aa).

Topologically, residues 1-51 (MESSRGKPGLNGSGGGAAAFDYSSRRGYYTGAGAALPPLAAGSRAPPVDPC) are cytoplasmic. The helical transmembrane segment at 52–72 (CVVLRVFVLLGTLASAVVMAA) threads the bilayer. Over 73–103 (DRQSTTVQIAAGEELAPPLRVPVTAKWTYSS) the chain is Extracellular. Residues 104-124 (AFVYFVVANAMVFAFSAAALA) form a helical membrane-spanning segment. Over 125 to 130 (AVRRRS) the chain is Cytoplasmic. Residues 131 to 151 (AVVPVMVGDLVAMALLFSAVG) form a helical membrane-spanning segment. Topologically, residues 152–185 (AAAQFGLLGERGNAHVRWAKVCDVYGPFCERAMA) are extracellular. Residues 186-206 (AVVVALIAAFADLVLLMLTIL) form a helical membrane-spanning segment. At 207-215 (TIHKASSYY) the chain is on the cytoplasmic side.

It belongs to the Casparian strip membrane proteins (CASP) family. As to quaternary structure, homodimer and heterodimers.

The protein localises to the cell membrane. The protein is CASP-like protein 1E1 of Oryza sativa subsp. japonica (Rice).